Reading from the N-terminus, the 498-residue chain is MSLADELLADLEEAAEEEEENLIDEDDLETIEEVQEEMQVDLNAESVKSIAKLSDSKLFSEILLKIDGYIKKQPKASEVMGPVEAAPEYKVIVDANNLTVEIENELNIIHKFIRDKYSKRFPELESLVPNALDYIRTVKELGNNLDKCKNNENLQQILTNATIMVVSVTASTTQGQQLTDEELERIEEACDMALELNQSKHRIYEYVESRMSFIAPNLSIIVGASTAAKIMGIAGGLTNLSKMPACNVMLLGAQRKTLSGFSSTSVLPHTGYIYHSDIVQSLPPDLHRKAARLVSAKCTLAARVDSFHESSEGKVGYDLKEEIERKFDKWQEPPPVKQVKPLPAPLDGQRKKRGGRRYRKMKERLGLTEIRKQANRMSFAEIEEDAYQEDLGFSLGHLGKSGSGRIRQAQVNEATKARISKTLQRTLQKQSVVYGGKSTIRDRSSGTASSVAFTPLQGLEIVNPQAAEKKVAEANQKYFSSMAEFLKVKSEKSGTMTQ.

Coiled coils occupy residues Glu-84–Lys-119 and Asp-180–Ile-214. Residues Ile-214–Glu-332 enclose the Nop domain. The interval Pro-333–Arg-356 is disordered. The short motif at Arg-350 to Glu-363 is the Nuclear localization signal (NLS) element.

It belongs to the PRP31 family. As to quaternary structure, identified in the spliceosome B complex. Component of the U4/U6-U5 tri-snRNP complex. Component of some MLL1/MLL complex.

The protein resides in the nucleus. It is found in the nucleus speckle. Its subcellular location is the cajal body. In terms of biological role, involved in pre-mRNA splicing as component of the spliceosome. Required for the assembly of the U4/U5/U6 tri-snRNP complex, one of the building blocks of the spliceosome. The protein is U4/U6 small nuclear ribonucleoprotein Prp31 (prpf31) of Xenopus tropicalis (Western clawed frog).